The following is a 133-amino-acid chain: Alcohol dehydrogenase, 15 kDa subunit (133 aa).

The first 24 residues, 1 to 24 (MFRRIVPVLGLALGLGLASQAAMA), serve as a signal peptide directing secretion. Residues 23–43 (MAQEQSPPPPPAVQGTPGKDF) form a disordered region. Position 25 is a pyrrolidone carboxylic acid (Q25).

As to quaternary structure, the alcohol dehydrogenase multicomponent enzyme system is composed of a dehydrogenase subunit I (AdhA), a cytochrome c subunit II (AdhB) and a subunit III (AdhS).

Its subcellular location is the cell membrane. Functionally, part of the alcohol dehydrogenase multicomponent enzyme system which is involved in the production of acetic acid and in the ethanol oxidase respiratory chain. Does not play an obligatory role for the alcohol dehydrogenase (ADH) activity. This Gluconobacter oxydans (strain 621H) (Gluconobacter suboxydans) protein is Alcohol dehydrogenase, 15 kDa subunit.